A 32-amino-acid polypeptide reads, in one-letter code: Photosystem I reaction center subunit XII (32 aa).

A helical membrane pass occupies residues 4 to 26; it reads ISDSQIIVILLSVFITSILALRL.

The protein belongs to the PsaM family.

Its subcellular location is the plastid. The protein resides in the chloroplast thylakoid membrane. This is Photosystem I reaction center subunit XII from Marchantia polymorpha (Common liverwort).